Reading from the N-terminus, the 491-residue chain is E3 ubiquitin-protein ligase Hakai (491 aa).

2 disordered regions span residues 1–20 and 33–61; these read MDHTDNELQGTNSSGSLGGL and KQASKVKPAPRTQRTVSRMPAKAPQGDEE. An RING-type zinc finger spans residues 109-149; it reads CDKCGLPIKVYGRMIPCKHVFCYDCAILHEKKGDKMCPGCS. Positions 148 to 206 are HYB domain; it reads CSDPVQRIEQCTRGSLFMCSIVQGCKRTYLSQRDLQAHINHRHMRAGKPVTRASLENVH. A C2H2-type zinc finger spans residues 164 to 190; that stretch reads FMCSIVQGCKRTYLSQRDLQAHINHRH. A phosphoserine mark is found at serine 201, serine 285, and serine 290. The segment at 255 to 491 is disordered; the sequence is QPHEDIRAPP…DQTRYRPYYQ (237 aa). Pro residues-rich tracts occupy residues 342-359, 372-389, and 399-423; these read APPPPPPPPISHPMPHPP, APPPPMTSAPPPITPPPG, and MNHPPPGPPPPQHGGPPVTAPPPHH. A compositionally biased stretch (polar residues) spans 427–442; it reads NSLPQFTEDQGTLSPP. Residues 457–478 are compositionally biased toward pro residues; sequence PRGPPPPPRMQGPPSQTPLPGP.

It belongs to the Hakai family. As to quaternary structure, homodimer. Interacts with tyrosine-phosphorylated SRC substrates. Component of the WMM complex, a N6-methyltransferase complex composed of a catalytic subcomplex, named MAC, and of an associated subcomplex, named MACOM. The MAC subcomplex is composed of METTL3 and METTL14. The MACOM subcomplex is composed of WTAP, ZC3H13, CBLL1/HAKAI, VIRMA, and, in some cases of RBM15 (RBM15 or RBM15B). Also a component of a MACOM-like complex, named WTAP complex, composed of WTAP, ZC3H13, CBLL1, VIRMA, RBM15, BCLAF1 and THRAP3. Post-translationally, phosphorylated on tyrosine residues. In terms of tissue distribution, detected in heart, brain, spleen, lung, liver, skeletal muscle, kidney and testis.

The protein localises to the nucleus speckle. It localises to the nucleus. Its subcellular location is the nucleoplasm. It is found in the cytoplasm. It catalyses the reaction S-ubiquitinyl-[E2 ubiquitin-conjugating enzyme]-L-cysteine + [acceptor protein]-L-lysine = [E2 ubiquitin-conjugating enzyme]-L-cysteine + N(6)-ubiquitinyl-[acceptor protein]-L-lysine.. The protein operates within protein modification; protein ubiquitination. E3 ubiquitin-protein ligase that mediates ubiquitination of several tyrosine-phosphorylated Src substrates, including CDH1, CTTN and DOK1. Targets CDH1 for endocytosis and degradation. Associated component of the WMM complex, a complex that mediates N6-methyladenosine (m6A) methylation of RNAs, a modification that plays a role in the efficiency of mRNA splicing and RNA processing. Its function in the WMM complex is unknown. In Mus musculus (Mouse), this protein is E3 ubiquitin-protein ligase Hakai.